The sequence spans 180 residues: Large ribosomal subunit protein uL5 (180 aa).

This sequence belongs to the universal ribosomal protein uL5 family. Part of the 50S ribosomal subunit; part of the 5S rRNA/L5/L18/L25 subcomplex. Contacts the 5S rRNA and the P site tRNA. Forms a bridge to the 30S subunit in the 70S ribosome.

In terms of biological role, this is one of the proteins that bind and probably mediate the attachment of the 5S RNA into the large ribosomal subunit, where it forms part of the central protuberance. In the 70S ribosome it contacts protein S13 of the 30S subunit (bridge B1b), connecting the 2 subunits; this bridge is implicated in subunit movement. Contacts the P site tRNA; the 5S rRNA and some of its associated proteins might help stabilize positioning of ribosome-bound tRNAs. The polypeptide is Large ribosomal subunit protein uL5 (Lactococcus lactis subsp. lactis (strain IL1403) (Streptococcus lactis)).